The primary structure comprises 141 residues: Protein stum homolog (141 aa).

S26 carries the post-translational modification Phosphoserine. The next 2 helical transmembrane spans lie at 51 to 71 and 87 to 107; these read FPVA…GTFV and RHVC…VLTA.

Belongs to the SPEC3 family. Stum subfamily.

Its subcellular location is the membrane. This Mus musculus (Mouse) protein is Protein stum homolog.